Here is a 339-residue protein sequence, read N- to C-terminus: Anthranilate phosphoribosyltransferase (339 aa).

Residues glycine 79, 82–83 (GD), serine 87, 89–92 (NIST), 107–115 (KHGNRSISS), and serine 119 each bind 5-phospho-alpha-D-ribose 1-diphosphate. Residue glycine 79 participates in anthranilate binding. Serine 91 lines the Mg(2+) pocket. An anthranilate-binding site is contributed by asparagine 110. Position 165 (arginine 165) interacts with anthranilate. Residues aspartate 224 and glutamate 225 each coordinate Mg(2+).

Belongs to the anthranilate phosphoribosyltransferase family. Homodimer. The cofactor is Mg(2+).

The enzyme catalyses N-(5-phospho-beta-D-ribosyl)anthranilate + diphosphate = 5-phospho-alpha-D-ribose 1-diphosphate + anthranilate. Its pathway is amino-acid biosynthesis; L-tryptophan biosynthesis; L-tryptophan from chorismate: step 2/5. Its function is as follows. Catalyzes the transfer of the phosphoribosyl group of 5-phosphorylribose-1-pyrophosphate (PRPP) to anthranilate to yield N-(5'-phosphoribosyl)-anthranilate (PRA). This is Anthranilate phosphoribosyltransferase from Listeria monocytogenes serotype 4a (strain HCC23).